The following is a 966-amino-acid chain: Probable transport protein MmpL11 (966 aa).

A run of 12 helical transmembrane segments spans residues 13–33 (WLVF…AMTQ), 188–208 (IILM…IPLA), 214–234 (VVIT…SVFV), 235–255 (TSTV…FILM), 279–299 (GLAV…IYLI), 311–331 (AILA…AVLA), 373–393 (ALAA…MVLG), 527–547 (TQPL…LISI), 557–577 (VLMT…VFQW), 595–615 (VPPL…IFLL), 646–666 (AALI…PLVA), and 668–688 (IGVA…LVLV).

Belongs to the resistance-nodulation-cell division (RND) (TC 2.A.6) family. MmpL subfamily.

It localises to the cell membrane. The protein is Probable transport protein MmpL11 (mmpL11) of Mycobacterium bovis (strain ATCC BAA-935 / AF2122/97).